The chain runs to 271 residues: Calretinin (271 aa).

6 consecutive EF-hand domains span residues 16 to 51 (LTAT…LEKA), 63 to 98 (NLGE…EENF), 107 to 142 (GSST…LLKK), 151 to 186 (KLQE…QENF), 195 to 230 (LTSE…LYEK), and 235 to 270 (MNIQ…SEPP). 25 residues coordinate Ca(2+): D29, D31, N33, Y35, E40, D76, N78, D80, K82, E87, D120, D122, S124, Y126, E131, D164, N166, D168, K170, E175, D208, D210, S212, Y214, and E219. A Phosphotyrosine modification is found at Y214.

The protein belongs to the calbindin family.

The protein localises to the synapse. Its subcellular location is the cell projection. The protein resides in the dendrite. Its function is as follows. Calcium-binding protein involved in calcium homeostasis and signal transduction. It plays a critical role in buffering intracellular calcium levels and modulating calcium-dependent signaling pathways. Predominantly expressed in specific neuronal populations, influences synaptic plasticity and neuronal excitability, contributing to learning and memory. During embryonic development, it facilitates neuronal differentiation and maturation. The sequence is that of Calretinin (CALB2) from Bos taurus (Bovine).